A 315-amino-acid chain; its full sequence is Methionyl-tRNA formyltransferase (315 aa).

109 to 112 contacts (6S)-5,6,7,8-tetrahydrofolate; the sequence is SLLP.

It belongs to the Fmt family.

It catalyses the reaction L-methionyl-tRNA(fMet) + (6R)-10-formyltetrahydrofolate = N-formyl-L-methionyl-tRNA(fMet) + (6S)-5,6,7,8-tetrahydrofolate + H(+). Attaches a formyl group to the free amino group of methionyl-tRNA(fMet). The formyl group appears to play a dual role in the initiator identity of N-formylmethionyl-tRNA by promoting its recognition by IF2 and preventing the misappropriation of this tRNA by the elongation apparatus. This is Methionyl-tRNA formyltransferase from Lachnospira eligens (strain ATCC 27750 / DSM 3376 / VPI C15-48 / C15-B4) (Eubacterium eligens).